A 173-amino-acid polypeptide reads, in one-letter code: Protein tyrosine phosphatase type IVA 3 (173 aa).

One can recognise a Tyrosine-protein phosphatase domain in the interval 8–161 (APVEVSYKHM…YRPKQRLRFK (154 aa)). Residues Cys49 and Cys104 are joined by a disulfide bond. Asp72 functions as the Proton donor in the catalytic mechanism. Cys104 functions as the Phosphocysteine intermediate in the catalytic mechanism. Residue Arg110 coordinates substrate. Cys170 is subject to Cysteine methyl ester. Cys170 is lipidated: S-farnesyl cysteine. The propeptide at 171 to 173 (CVM) is removed in mature form.

The protein belongs to the protein-tyrosine phosphatase family. As to quaternary structure, interacts with tubulin. In terms of processing, farnesylated. Farnesylation is required for membrane targeting. In terms of tissue distribution, mainly expressed in cardiomyocytes and skeletal muscle; also found in pancreas. Consistently overexpressed in colon cancer metastasis.

Its subcellular location is the cell membrane. It localises to the early endosome. It carries out the reaction O-phospho-L-tyrosyl-[protein] + H2O = L-tyrosyl-[protein] + phosphate. With respect to regulation, inhibited by sodium orthovanadate and peroxovanadium compounds, and by pentamidine. In terms of biological role, protein tyrosine phosphatase which stimulates progression from G1 into S phase during mitosis. Enhances cell proliferation, cell motility and invasive activity, and promotes cancer metastasis. May be involved in the progression of cardiac hypertrophy by inhibiting intracellular calcium mobilization in response to angiotensin II. The chain is Protein tyrosine phosphatase type IVA 3 (PTP4A3) from Homo sapiens (Human).